Consider the following 334-residue polypeptide: Holliday junction branch migration complex subunit RuvB (334 aa).

The interval 4 to 184 (ADRLIAADAQ…FGIVQRLEFY (181 aa)) is large ATPase domain (RuvB-L). Residues Ile-23, Arg-24, Gly-65, Lys-68, Thr-69, Thr-70, 131–133 (EDY), Arg-174, Tyr-184, and Arg-221 contribute to the ATP site. A Mg(2+)-binding site is contributed by Thr-69. A small ATPAse domain (RuvB-S) region spans residues 185-255 (QVADLQHIVG…VAAQALNMLD (71 aa)). The segment at 258 to 334 (AAGFDYMDRK…YQHFGIDRAE (77 aa)) is head domain (RuvB-H). Arg-294, Arg-313, and Arg-318 together coordinate DNA.

Belongs to the RuvB family. Homohexamer. Forms an RuvA(8)-RuvB(12)-Holliday junction (HJ) complex. HJ DNA is sandwiched between 2 RuvA tetramers; dsDNA enters through RuvA and exits via RuvB. An RuvB hexamer assembles on each DNA strand where it exits the tetramer. Each RuvB hexamer is contacted by two RuvA subunits (via domain III) on 2 adjacent RuvB subunits; this complex drives branch migration. In the full resolvosome a probable DNA-RuvA(4)-RuvB(12)-RuvC(2) complex forms which resolves the HJ.

The protein localises to the cytoplasm. The enzyme catalyses ATP + H2O = ADP + phosphate + H(+). The RuvA-RuvB-RuvC complex processes Holliday junction (HJ) DNA during genetic recombination and DNA repair, while the RuvA-RuvB complex plays an important role in the rescue of blocked DNA replication forks via replication fork reversal (RFR). RuvA specifically binds to HJ cruciform DNA, conferring on it an open structure. The RuvB hexamer acts as an ATP-dependent pump, pulling dsDNA into and through the RuvAB complex. RuvB forms 2 homohexamers on either side of HJ DNA bound by 1 or 2 RuvA tetramers; 4 subunits per hexamer contact DNA at a time. Coordinated motions by a converter formed by DNA-disengaged RuvB subunits stimulates ATP hydrolysis and nucleotide exchange. Immobilization of the converter enables RuvB to convert the ATP-contained energy into a lever motion, pulling 2 nucleotides of DNA out of the RuvA tetramer per ATP hydrolyzed, thus driving DNA branch migration. The RuvB motors rotate together with the DNA substrate, which together with the progressing nucleotide cycle form the mechanistic basis for DNA recombination by continuous HJ branch migration. Branch migration allows RuvC to scan DNA until it finds its consensus sequence, where it cleaves and resolves cruciform DNA. This chain is Holliday junction branch migration complex subunit RuvB, found in Edwardsiella ictaluri (strain 93-146).